The sequence spans 877 residues: Alanine--tRNA ligase (877 aa).

Zn(2+)-binding residues include H567, H571, C669, and H673.

The protein belongs to the class-II aminoacyl-tRNA synthetase family. Zn(2+) is required as a cofactor.

It localises to the cytoplasm. It carries out the reaction tRNA(Ala) + L-alanine + ATP = L-alanyl-tRNA(Ala) + AMP + diphosphate. Functionally, catalyzes the attachment of alanine to tRNA(Ala) in a two-step reaction: alanine is first activated by ATP to form Ala-AMP and then transferred to the acceptor end of tRNA(Ala). Also edits incorrectly charged Ser-tRNA(Ala) and Gly-tRNA(Ala) via its editing domain. In Rickettsia rickettsii (strain Iowa), this protein is Alanine--tRNA ligase.